We begin with the raw amino-acid sequence, 893 residues long: Zinc finger protein 281 (893 aa).

4 disordered regions span residues 1–113, 126–148, 153–172, and 198–251; these read MKIG…FPSQ, IKQEKPADPEEQPSHHHHHHHHY, AGAEERSPGLGGGEGGSHGV, and SGSR…GAVL. Lysine 2 is covalently cross-linked (Glycyl lysine isopeptide (Lys-Gly) (interchain with G-Cter in SUMO2)). The span at 7–36 shows a compositional bias: gly residues; the sequence is FLSGGGGPSSSGGSGSGGSSGSASGGSGGG. Glycyl lysine isopeptide (Lys-Gly) (interchain with G-Cter in SUMO2) cross-links involve residues lysine 100 and lysine 127. Over residues 127–139 the composition is skewed to basic and acidic residues; that stretch reads KQEKPADPEEQPS. Residues 161-170 are compositionally biased toward gly residues; sequence GLGGGEGGSH. Over residues 201-216 the composition is skewed to basic and acidic residues; that stretch reads RTDEHGNQEPKQDANV. Residues lysine 211, lysine 217, lysine 223, lysine 230, lysine 240, and lysine 256 each participate in a glycyl lysine isopeptide (Lys-Gly) (interchain with G-Cter in SUMO2) cross-link. 3 consecutive C2H2-type zinc fingers follow at residues 258-280, 286-308, and 314-336; these read HICDHCSAAFRSSYHLRRHVLIH, FQCSQCSMGFIQKYLLQRHEKIH, and FGCDQCSMKFIQKYHMERHKRTH. Residues lysine 298 and lysine 322 each participate in a glycyl lysine isopeptide (Lys-Gly) (interchain with G-Cter in SUMO2) cross-link. Residues 342-364 form a C2H2-type 4; atypical zinc finger; the sequence is YKCDTCQQYFSRTDRLLKHRRTC. Residue lysine 370 forms a Glycyl lysine isopeptide (Lys-Gly) (interchain with G-Cter in SUMO2) linkage. The disordered stretch occupies residues 371–425; the sequence is GAASAEPGSSNHNSMGNLAVLSQGNTSSSRRKSKSKSIAIENKEHKTGKTNESQM. Positions 377-396 are enriched in polar residues; it reads PGSSNHNSMGNLAVLSQGNT. The residue at position 392 (serine 392) is a Phosphoserine. Residues lysine 406, lysine 413, lysine 457, and lysine 474 each participate in a glycyl lysine isopeptide (Lys-Gly) (interchain with G-Cter in SUMO2) cross-link. Serine 481 carries the phosphoserine modification. Residues lysine 490, lysine 495, lysine 536, lysine 596, lysine 614, and lysine 619 each participate in a glycyl lysine isopeptide (Lys-Gly) (interchain with G-Cter in SUMO2) cross-link. Positions 613-658 are disordered; that stretch reads GKSETQKEDPFNLTEPRVDLHTSGEHSELVQEENLSPGTQTPSNDK. Residues 616–641 are compositionally biased toward basic and acidic residues; it reads ETQKEDPFNLTEPRVDLHTSGEHSEL. The segment covering 645-658 has biased composition (polar residues); that stretch reads ENLSPGTQTPSNDK. Position 648 is a phosphoserine (serine 648). Glycyl lysine isopeptide (Lys-Gly) (interchain with G-Cter in SUMO2) cross-links involve residues lysine 658 and lysine 667. Residues 775 to 813 show a composition bias toward polar residues; that stretch reads SSAFQSSSQKLTSQKEQQKNLESSTSFQIPSQELASQID. The segment at 775–815 is disordered; it reads SSAFQSSSQKLTSQKEQQKNLESSTSFQIPSQELASQIDPQ. Serine 782 is modified (phosphoserine). Glycyl lysine isopeptide (Lys-Gly) (interchain with G-Cter in SUMO2) cross-links involve residues lysine 784, lysine 789, and lysine 793. Position 805 is a phosphoserine (serine 805). Residues lysine 816 and lysine 838 each participate in a glycyl lysine isopeptide (Lys-Gly) (interchain with G-Cter in SUMO2) cross-link. Threonine 886 carries the phosphothreonine modification.

This sequence belongs to the krueppel C2H2-type zinc-finger protein family. As to quaternary structure, interacts with NANOG. Associates with the NuRD complex.

Its subcellular location is the nucleus. Transcription repressor that plays a role in regulation of embryonic stem cells (ESCs) differentiation. Required for ESCs differentiation and acts by mediating autorepression of NANOG in ESCs: binds to the NANOG promoter and promotes association of NANOG protein to its own promoter and recruits the NuRD complex, which deacetylates histones. Not required for establishement and maintenance of ESCs. Represses the transcription of a number of genes including GAST, ODC1 and VIM. Binds to the G-rich box in the enhancer region of these genes. This is Zinc finger protein 281 (Znf281) from Mus musculus (Mouse).